A 244-amino-acid polypeptide reads, in one-letter code: Short-chain dehydrogenase/reductase family member NovK (244 aa).

NADP(+) is bound by residues 9 to 12, 59 to 60, and 154 to 158; these read GGGE, EL, and RPVLD.

The protein belongs to the short-chain dehydrogenases/reductases (SDR) family. As to quaternary structure, heterotetramer; the NovJ(2)K(2) heterotetramer is composed of subunits of 2 NovJ and 2 subunits of NovK.

Its pathway is antibiotic biosynthesis; novobiocin biosynthesis. In terms of biological role, non-catalytic subunit of the NovJ(2)K(2) heterotetramer that catalyzes the NADPH-dependent reduction of the tyrosyl moiety of L-beta-OH-Tyr-S-NovH intermediate to yield the tethered beta-ketotyrosyl-S-NovH in the novobiocin biosynthesis pathway. Novobiocin is an aminocoumarin family antibiotic that targets bacterial DNA gyrases. The protein is Short-chain dehydrogenase/reductase family member NovK (novK) of Streptomyces niveus (Streptomyces spheroides).